The sequence spans 217 residues: MASLFSGRILIRNNSDQDEVETEAELSRRLENRLVLLFFGAGACPQCQAFAPVLKDFFVRLTDEFYVLRAAQLALVYVSQDPTEEQQDLFLRDMPEKWLFLPFHDELRRDLGRQFSVRQLPAVVVLKPGGDVLTSDATEEIQRLGPACFANWQEAAELLDRSFLQPEDLDEPARRSITEPLRRRKYRVDRDVGRERGRNGRDSGDPQGDAGTRAELW.

The Thioredoxin domain occupies 1–164; sequence MASLFSGRIL…AAELLDRSFL (164 aa). The span at 188 to 204 shows a compositional bias: basic and acidic residues; that stretch reads VDRDVGRERGRNGRDSG. Positions 188-217 are disordered; sequence VDRDVGRERGRNGRDSGDPQGDAGTRAELW.

The protein belongs to the nucleoredoxin family. As to quaternary structure, interacts with isoform 1 of BSG. Expressed in the retina (at protein level). Expressed predominantly by photoreceptors in both the inner and outer nuclear layer (at protein level). Not expressed in the testis, spleen, intestine, lung, cerebellum, or kidney.

The protein localises to the cell projection. The protein resides in the cilium. It localises to the photoreceptor outer segment. Functionally, plays an important role in retinal cone photoreceptor survival. In association with glucose transporter SLC16A1/GLUT1 and BSG, promotes retinal cone survival by enhancing aerobic glycolysis and accelerating the entry of glucose into photoreceptors. May play a role in cone cell viability, slowing down cone degeneration, does not seem to play a role in degenerating rods. The sequence is that of Nucleoredoxin-like protein 1 (Nxnl1) from Mus musculus (Mouse).